The sequence spans 559 residues: Potassium-transporting ATPase potassium-binding subunit (559 aa).

The next 12 membrane-spanning stretches (helical) occupy residues 5-25, 63-83, 131-151, 173-193, 254-274, 282-302, 327-347, 356-376, 379-399, 416-436, 483-503, and 525-545; these read GFLL…PLGM, LLAI…LLML, VGLT…VFAL, ITLW…IQQG, VQML…GEVV, AILW…MWAE, FGIL…CGAV, ALGG…FGGV, GLYG…LMVG, MIAL…ALAM, LLLA…VMAI, and ALFI…TFIP.

The protein belongs to the KdpA family. As to quaternary structure, the system is composed of three essential subunits: KdpA, KdpB and KdpC.

The protein resides in the cell inner membrane. Its function is as follows. Part of the high-affinity ATP-driven potassium transport (or Kdp) system, which catalyzes the hydrolysis of ATP coupled with the electrogenic transport of potassium into the cytoplasm. This subunit binds the periplasmic potassium ions and delivers the ions to the membrane domain of KdpB through an intramembrane tunnel. The polypeptide is Potassium-transporting ATPase potassium-binding subunit (Klebsiella pneumoniae subsp. pneumoniae (strain ATCC 700721 / MGH 78578)).